The chain runs to 223 residues: MHKFTKVFFVAILVHTLKSGLVFTPVSGTAIDIDKDGKFADRITINHFQSDMEGYKAYTYQKEGDKYVNISKVFYGERLLKVGGYNMKCDYVFYIKVFWKGELAPFLIKLKYYSWSWAPYKKHFKLNPQLEWEEVFIPTIDETSETGYRRLFKQRMDNPFSLIGDDLLASYKPFKATKAEQVIAGTTEEEKSDKKKYVLMVVVVVVFVVVASLVVFLVKFCLK.

An N-terminal signal peptide occupies residues 1-19 (MHKFTKVFFVAILVHTLKS). Residues 20 to 197 (GLVFTPVSGT…EEEKSDKKKY (178 aa)) lie on the Extracellular side of the membrane. N-linked (GlcNAc...) asparagine glycosylation occurs at N69. A helical transmembrane segment spans residues 198–218 (VLMVVVVVVFVVVASLVVFLV). The Cytoplasmic portion of the chain corresponds to 219–223 (KFCLK).

It is found in the membrane. This chain is 23 kDa piroplasm membrane protein, found in Theileria buffeli.